A 393-amino-acid polypeptide reads, in one-letter code: Probable alpha-1,6-mannosyltransferase MNN10 (393 aa).

At 1–52 (MSSVPYNSQLPISNHLEYDEDEKKSRGSKLGLKYKMIYWRKTLCSSLARWRK) the chain is on the cytoplasmic side. Residues 53 to 73 (LILLISLALFLFIWISDSTIS) traverse the membrane as a helical; Signal-anchor for type II membrane protein segment. The Lumenal portion of the chain corresponds to 74–393 (RNPSTTSFQG…RKWYTRFFFP (320 aa)). The interval 77–97 (STTSFQGQNSNDNKLSNTGSS) is disordered.

This sequence belongs to the glycosyltransferase 34 family. In terms of assembly, component of the M-Pol II complex composed of ANP1, MNN9, MNN10, MNN11 and HOC1.

It localises to the endoplasmic reticulum membrane. The protein localises to the golgi apparatus. Its subcellular location is the cis-Golgi network membrane. In terms of biological role, required for polarized growth and efficient budding. The M-Pol II complex possesses alpha-1,6-mannosyltransferase activity and is probably involved in the elongation of the mannan backbone of N-linked glycans on cell wall and periplasmic proteins. The protein is Probable alpha-1,6-mannosyltransferase MNN10 (MNN10) of Saccharomyces cerevisiae (strain ATCC 204508 / S288c) (Baker's yeast).